The primary structure comprises 911 residues: Isoleucine--tRNA ligase (911 aa).

The short motif at 57–67 is the 'HIGH' region element; that stretch reads PYANGDIHMGH. L-isoleucyl-5'-AMP is bound at residue E551. A 'KMSKS' region motif is present at residues 592–596; it reads KMSKS. K595 serves as a coordination point for ATP. Residues C881, C884, C901, and C904 each contribute to the Zn(2+) site.

The protein belongs to the class-I aminoacyl-tRNA synthetase family. IleS type 1 subfamily. Monomer. The cofactor is Zn(2+).

It localises to the cytoplasm. The catalysed reaction is tRNA(Ile) + L-isoleucine + ATP = L-isoleucyl-tRNA(Ile) + AMP + diphosphate. Catalyzes the attachment of isoleucine to tRNA(Ile). As IleRS can inadvertently accommodate and process structurally similar amino acids such as valine, to avoid such errors it has two additional distinct tRNA(Ile)-dependent editing activities. One activity is designated as 'pretransfer' editing and involves the hydrolysis of activated Val-AMP. The other activity is designated 'posttransfer' editing and involves deacylation of mischarged Val-tRNA(Ile). In Exiguobacterium sibiricum (strain DSM 17290 / CCUG 55495 / CIP 109462 / JCM 13490 / 255-15), this protein is Isoleucine--tRNA ligase.